The primary structure comprises 156 residues: EPIDERMAL PATTERNING FACTOR-like protein 6 (156 aa).

Positions 1–47 (MGFERTSSSLSLLSSSLPSSLQPSENTRAKFSLFYLLLLFFVLCVIA) are cleaved as a signal peptide. Disulfide bonds link C113/C147, C117/C123, and C120/C149.

The protein belongs to the plant cysteine rich small secretory peptide family. Epidermal patterning factor subfamily. As to quaternary structure, interacts with ERECTA. As to expression, expressed in the internal layers of the root, hypocotyl and stems, and in the midrib of developing rosette leaves. Detected in a ring of cells surrounding the vascular elements. Expressed in developing stems soon after bolting, in inflorescence stems, near the root apex and in the chalazal region of ovules. Not found in cotyledons or in stomatal precursors or stomata.

Its subcellular location is the secreted. Its function is as follows. Acts primarily as positive regulator of inflorescence growth. Endodermal expression is sufficient for proper inflorescence architecture. Redundantly involved with EPFL4 in procambial development regulation. Also acts as tissue-specific regulator of epidermal pattern. Controls stomatal patterning by repressing stomatal production. TMM (AC Q9SSD1) functions to dampen or block CHAL signaling. Not processed by SDD1 (AC O64495). Acts as growth-regulatory ligand for ERECTA family receptors. The chain is EPIDERMAL PATTERNING FACTOR-like protein 6 from Arabidopsis thaliana (Mouse-ear cress).